The following is a 330-amino-acid chain: Probable deoxyhypusine synthase (330 aa).

The active-site Nucleophile is the lysine 303.

Belongs to the deoxyhypusine synthase family. The cofactor is NAD(+).

It catalyses the reaction [eIF5A protein]-L-lysine + spermidine = [eIF5A protein]-deoxyhypusine + propane-1,3-diamine. It functions in the pathway protein modification; eIF5A hypusination. In terms of biological role, catalyzes the NAD-dependent oxidative cleavage of spermidine and the subsequent transfer of the butylamine moiety of spermidine to the epsilon-amino group of a specific lysine residue of the eIF-5A precursor protein to form the intermediate deoxyhypusine residue. The polypeptide is Probable deoxyhypusine synthase (dys) (Methanocaldococcus jannaschii (strain ATCC 43067 / DSM 2661 / JAL-1 / JCM 10045 / NBRC 100440) (Methanococcus jannaschii)).